The chain runs to 189 residues: dCTP deaminase (189 aa).

DCTP is bound by residues 112 to 117 (KSTYAR), 136 to 138 (TLE), Q157, Y171, and Q181. Catalysis depends on E138, which acts as the Proton donor/acceptor.

This sequence belongs to the dCTP deaminase family. In terms of assembly, homotrimer.

It catalyses the reaction dCTP + H2O + H(+) = dUTP + NH4(+). It functions in the pathway pyrimidine metabolism; dUMP biosynthesis; dUMP from dCTP (dUTP route): step 1/2. In terms of biological role, catalyzes the deamination of dCTP to dUTP. This Alcanivorax borkumensis (strain ATCC 700651 / DSM 11573 / NCIMB 13689 / SK2) protein is dCTP deaminase.